The chain runs to 140 residues: MAHTMRVEVVSAEEEIFSGEAEFVALPGESGELGILPGHTPLITRIRPGAVRIKIAGQAEDEFVFVAGGILEVQPHGVTVLADTAIRGADLDEAKAAEAKRLAEEALVNKESKIDYAQAQAELATAIAQLAAIQRLRQKR.

This sequence belongs to the ATPase epsilon chain family. In terms of assembly, F-type ATPases have 2 components, CF(1) - the catalytic core - and CF(0) - the membrane proton channel. CF(1) has five subunits: alpha(3), beta(3), gamma(1), delta(1), epsilon(1). CF(0) has three main subunits: a, b and c.

The protein localises to the cell inner membrane. Functionally, produces ATP from ADP in the presence of a proton gradient across the membrane. The chain is ATP synthase epsilon chain from Herminiimonas arsenicoxydans.